The following is a 386-amino-acid chain: DNA-directed RNA polymerase subunit Rpo1C (386 aa).

Belongs to the RNA polymerase beta' chain family. Part of the RNA polymerase complex.

It localises to the cytoplasm. It carries out the reaction RNA(n) + a ribonucleoside 5'-triphosphate = RNA(n+1) + diphosphate. In terms of biological role, DNA-dependent RNA polymerase (RNAP) catalyzes the transcription of DNA into RNA using the four ribonucleoside triphosphates as substrates. Forms part of the jaw domain. In Methanococcus maripaludis (strain C6 / ATCC BAA-1332), this protein is DNA-directed RNA polymerase subunit Rpo1C.